The chain runs to 96 residues: Large ribosomal subunit protein bL27 (96 aa).

Residues 1 to 10 (MLLKLNIQLF) constitute a propeptide that is removed on maturation.

Belongs to the bacterial ribosomal protein bL27 family. Post-translationally, the N-terminus is cleaved by ribosomal processing cysteine protease Prp.

This is Large ribosomal subunit protein bL27 from Phytoplasma mali (strain AT).